The following is an 875-amino-acid chain: Alanine--tRNA ligase (875 aa).

Residues His567, His571, Cys669, and His673 each coordinate Zn(2+).

Belongs to the class-II aminoacyl-tRNA synthetase family. Requires Zn(2+) as cofactor.

It localises to the cytoplasm. It carries out the reaction tRNA(Ala) + L-alanine + ATP = L-alanyl-tRNA(Ala) + AMP + diphosphate. In terms of biological role, catalyzes the attachment of alanine to tRNA(Ala) in a two-step reaction: alanine is first activated by ATP to form Ala-AMP and then transferred to the acceptor end of tRNA(Ala). Also edits incorrectly charged Ser-tRNA(Ala) and Gly-tRNA(Ala) via its editing domain. The chain is Alanine--tRNA ligase from Geobacter sulfurreducens (strain ATCC 51573 / DSM 12127 / PCA).